A 1507-amino-acid chain; its full sequence is DDB1- and CUL4-associated factor 1 (1507 aa).

Positions 141-500 (QPLRTYSTGL…STLEILNLED (360 aa)) are protein kinase-like. 2 positions are modified to phosphoserine: S202 and S255. The interval 242-288 (HLDSGHKTSSRVNSTTKPEDGGLKKNKSAKQGDRENFRKAKQKLGFS) is disordered. The Chromo domain maps to 562 to 593 (SYTHEQIVEMMEFLIEYGPAQLYWEPAEVFLK). K701 is modified (N6-acetyllysine). A Phosphoserine modification is found at S828. Positions 846-878 (PEKELLLLIRNHLISKGLGETATVLTKEADLPM) constitute a LisH domain. A Phosphothreonine modification is found at T888. A phosphoserine mark is found at S895 and S898. Positions 917–947 (AAVGASAPSAPTAHPQPRPPQGPLALPGPSY) are disordered. Phosphoserine is present on residues S979 and S1000. 5 WD repeats span residues 1091-1130 (EDES…EEAS), 1133-1174 (CHNS…DMKH), 1176-1213 (FTED…KLLT), 1215-1247 (FNPD…WDVR), and 1248-1290 (SAQA…LLHT). The interval 1091–1290 (EDESGFTCCA…DLRTFHLLHT (200 aa)) is WD repeat-like region. Short sequence motifs (DWD box) lie at residues 1242 to 1249 (VLWDVRSA) and 1278 to 1285 (EIWDLRTF). At S1328 the chain carries Phosphoserine. The segment at 1393 to 1507 (RLAEDEDEEE…EDDIILSLNE (115 aa)) is disordered. Acidic residues-rich tracts occupy residues 1396–1483 (EDED…EEVE) and 1490–1501 (DSSDNSDLEDDI). Residues 1418–1507 (DDDTDDLDEL…EDDIILSLNE (90 aa)) are interaction with NF2.

The protein belongs to the VPRBP/DCAF1 family. Component of the DCX (DDB1-CUL4-X-box) E3 ubiquitin-protein ligase complex, named CUL4A-RBX1-DDB1-DCAF1/VPRBP complex. Interacts with DDB1; the interaction is direct. Also forms a ternary complex with DDA1 and DDB1. Interacts with NF2 (via FERM domain). Component of the EDVP complex, a E3 ligase complex containing DYRK2, EDD/UBR5, DDB1 and DCAF1. Interacts with DYRK2; the interaction is direct. Interacts with RAG1; the interaction is direct. Interacts with LLGL1 and LLGL2. Interacts with histone H3. Interacts with ESR1 and LATS1; probably recruited by LATS1 to promote ESR1 ubiquitination and ubiquitin-mediated proteasomal degradation. Directly interacts with TET1, TET2 and TET3 (via C-terminus). Interacts with CEP78; promoting DCAF1 localization to centrosomes. In terms of assembly, (Microbial infection) Interacts with HIV-1 virus Vpr protein; the interaction is direct. As to quaternary structure, (Microbial infection) Interacts with HIV-2 virus Vpx protein; the interaction is direct and the complex recruits SAMHD1 to promote its ubiquitin-dependent proteasomal degradation. (Microbial infection) Interacts (via C-terminus) with human cytomegalovirus protein UL35; this interaction induces the accumulation of cells in the G2 phase of the cell cycle. In terms of tissue distribution, ubiquitously expressed.

The protein localises to the cytoplasm. The protein resides in the nucleus. It is found in the cytoskeleton. Its subcellular location is the microtubule organizing center. It localises to the centrosome. It catalyses the reaction L-seryl-[protein] + ATP = O-phospho-L-seryl-[protein] + ADP + H(+). It carries out the reaction L-threonyl-[protein] + ATP = O-phospho-L-threonyl-[protein] + ADP + H(+). The protein operates within protein modification; protein ubiquitination. Its function is as follows. Acts both as a substrate recognition component of E3 ubiquitin-protein ligase complexes and as an atypical serine/threonine-protein kinase, playing key roles in various processes such as cell cycle, telomerase regulation and histone modification. Probable substrate-specific adapter of a DCX (DDB1-CUL4-X-box) E3 ubiquitin-protein ligase complex, named CUL4A-RBX1-DDB1-DCAF1/VPRBP complex, which mediates ubiquitination and proteasome-dependent degradation of proteins such as NF2. Involved in the turnover of methylated proteins: recognizes and binds methylated proteins via its chromo domain, leading to ubiquitination of target proteins by the RBX1-DDB1-DCAF1/VPRBP complex. The CUL4A-RBX1-DDB1-DCAF1/VPRBP complex is also involved in B-cell development: DCAF1 is recruited by RAG1 to ubiquitinate proteins, leading to limit error-prone repair during V(D)J recombination. Also part of the EDVP complex, an E3 ligase complex that mediates ubiquitination of proteins such as TERT, leading to TERT degradation and telomerase inhibition. The EDVP complex also mediates ubiquitination and degradation of CCP110. Also acts as an atypical serine/threonine-protein kinase that specifically mediates phosphorylation of 'Thr-120' of histone H2A (H2AT120ph) in a nucleosomal context, thereby repressing transcription. H2AT120ph is present in the regulatory region of many tumor suppresor genes, down-regulates their transcription and is present at high level in a number of tumors. Involved in JNK-mediated apoptosis during cell competition process via its interaction with LLGL1 and LLGL2. By acting on TET dioxygenses, essential for oocyte maintenance at the primordial follicle stage, hence essential for female fertility. (Microbial infection) In case of infection by HIV-1 virus, it is recruited by HIV-1 Vpr in order to hijack the CUL4A-RBX1-DDB1-DCAF1/VPRBP function leading to arrest the cell cycle in G2 phase, and also to protect the viral protein from proteasomal degradation by another E3 ubiquitin ligase. The HIV-1 Vpr protein hijacks the CUL4A-RBX1-DDB1-DCAF1/VPRBP complex to promote ubiquitination and degradation of proteins such as TERT and ZIP/ZGPAT. In terms of biological role, (Microbial infection) In case of infection by HIV-2 virus, it is recruited by HIV-2 Vpx in order to hijack the CUL4A-RBX1-DDB1-DCAF1/VPRBP function leading to enhanced efficiency of macrophage infection and promotion of the replication of cognate primate lentiviruses in cells of monocyte/macrophage lineage. The sequence is that of DDB1- and CUL4-associated factor 1 from Homo sapiens (Human).